The following is a 241-amino-acid chain: uncharacterized protein (241 aa).

Residues 147 to 212 form the HTH luxR-type domain; sequence FSYRSVILTL…EMYAWINSAQ (66 aa).

This is an uncharacterized protein from Escherichia coli O157:H7.